A 331-amino-acid polypeptide reads, in one-letter code: Calcium-binding and coiled-coil domain-containing protein 2 (331 aa).

A CLIR motif is present at residues 128–131 (IMVV). Residues 132–309 (INKEKVEEME…EKASWEKEKA (178 aa)) adopt a coiled-coil conformation. A disordered region spans residues 189–310 (KASWEKEKAS…KASWEKEKAP (122 aa)). Residues 190 to 193 (ASWE) carry the LIR-like motif. An interaction with LGALS8 region spans residues 292 to 302 (KEKASWEEEKA).

It belongs to the CALCOCO family. Dimer. Part of a complex consisting of CALCOCO2, TAX1BP1 and MYO6. Interacts with MYO6. Interacts with GEMIN4. Interacts with ATG8 family members MAP1LC3A, MAP1LC3B, GABARAP, GABARAPL1 and GABARAPL2. Interacts with ATG8 family member MAP1LC3C. Interacts with LGALS8. Interacts with TOM1; the interaction is indirect and is mediated by MYO6, which acts as a bridge between TOM1 and CALCOCO2. Interacts with AZI2.

Its subcellular location is the cytoplasm. The protein resides in the perinuclear region. The protein localises to the cytoskeleton. It localises to the cytoplasmic vesicle. It is found in the autophagosome membrane. Functionally, xenophagy-specific receptor required for autophagy-mediated intracellular bacteria degradation. Acts as an effector protein of galectin-sensed membrane damage that restricts the proliferation of infecting pathogens upon entry into the cytosol by targeting LGALS8-associated bacteria for autophagy. Initially orchestrates bacteria targeting to autophagosomes and subsequently ensures pathogen degradation by regulating pathogen-containing autophagosome maturation. Bacteria targeting to autophagosomes relies on its interaction with MAP1LC3A, MAP1LC3B and/or GABARAPL2, whereas regulation of pathogen-containing autophagosome maturation requires the interaction with MAP3LC3C. May play a role in ruffle formation and actin cytoskeleton organization and seems to negatively regulate constitutive secretion. This is Calcium-binding and coiled-coil domain-containing protein 2 from Mus musculus (Mouse).